The chain runs to 709 residues: Cell adhesion molecule CEACAM3 (709 aa).

The signal sequence occupies residues 1–34; the sequence is MELSSVLPCKRCTPWRGLLLTASLLTCWLLPTTA. Ig-like V-type domains are found at residues 35 to 142, 155 to 262, 275 to 382, 393 to 500, and 509 to 616; these read QVSI…HVYF, QLSI…QVDT, QLTV…QVNT, LLTI…SVHT, and QLVI…HIYK. N-linked (GlcNAc...) asparagine glycosylation is found at Asn-73, Asn-86, Asn-103, Asn-110, Asn-133, Asn-207, Asn-224, Asn-231, Asn-327, Asn-344, Asn-351, Asn-381, Asn-462, Asn-561, Asn-578, and Asn-585. One can recognise an Ig-like C2-type domain in the interval 631–695; that stretch reads RVKSSVVLTC…YRCEVSNPVS (65 aa).

This sequence belongs to the immunoglobulin superfamily. CEA family. As to expression, expression detected only in placenta.

In terms of biological role, possibly involved in cell adhesion. In Rattus norvegicus (Rat), this protein is Cell adhesion molecule CEACAM3.